A 326-amino-acid polypeptide reads, in one-letter code: Peroxidase 1 (326 aa).

Residues 1–22 (MASSRVILALLLAAAAVMASSA) form the signal peptide. The residue at position 23 (glutamine 23) is a Pyrrolidone carboxylic acid. 4 disulfide bridges follow: cysteine 33–cysteine 112, cysteine 66–cysteine 71, cysteine 118–cysteine 322, and cysteine 196–cysteine 231. Catalysis depends on histidine 64, which acts as the Proton acceptor. Residues aspartate 65, valine 68, glycine 70, aspartate 72, and serine 74 each coordinate Ca(2+). N-linked (GlcNAc...) asparagine glycans are attached at residues asparagine 82 and asparagine 153. Proline 159 contributes to the substrate binding site. Asparagine 164 is a glycosylation site (N-linked (GlcNAc...) asparagine). Histidine 189 lines the heme b pocket. Threonine 190 is a Ca(2+) binding site. N-linked (GlcNAc...) asparagine glycans are attached at residues asparagine 205 and asparagine 237. Residues aspartate 244, serine 247, and aspartate 252 each contribute to the Ca(2+) site.

It belongs to the peroxidase family. Classical plant (class III) peroxidase subfamily. The cofactor is Ca(2+). Requires heme b as cofactor.

Its subcellular location is the secreted. The catalysed reaction is 2 a phenolic donor + H2O2 = 2 a phenolic radical donor + 2 H2O. Its function is as follows. Removal of H(2)O(2), oxidation of toxic reductants, biosynthesis and degradation of lignin, suberization, auxin catabolism, response to environmental stresses such as wounding, pathogen attack and oxidative stress. These functions might be dependent on each isozyme/isoform in each plant tissue. The protein is Peroxidase 1 (PRX74) of Oryza sativa subsp. japonica (Rice).